A 168-amino-acid chain; its full sequence is MSPKTHTLSVLVEDKPGVLARVAALFSRRGFNIESLAVGATECKDRSRMTIVVSAEDTPLEQITKQLNKLINVIKIVEQDDEHSVSRELALIKVQADAGSRSQVIEAVNLFRANVIDVSPESLTVEATGNRGKLEALLRVLEPFGIREIAQSGMVSLSRGPRGIGTAK.

The 76-residue stretch at 7–82 (TLSVLVEDKP…VIKIVEQDDE (76 aa)) folds into the ACT domain.

The protein belongs to the acetolactate synthase small subunit family. Dimer of large and small chains.

The enzyme catalyses 2 pyruvate + H(+) = (2S)-2-acetolactate + CO2. The protein operates within amino-acid biosynthesis; L-isoleucine biosynthesis; L-isoleucine from 2-oxobutanoate: step 1/4. It functions in the pathway amino-acid biosynthesis; L-valine biosynthesis; L-valine from pyruvate: step 1/4. In Mycobacterium bovis (strain ATCC BAA-935 / AF2122/97), this protein is Acetolactate synthase small subunit (ilvH).